The chain runs to 213 residues: Uracil phosphoribosyltransferase (213 aa).

5-phospho-alpha-D-ribose 1-diphosphate is bound by residues arginine 78, arginine 103, and 130–138; that span reads DPMLATGGS. Residues isoleucine 193 and 198–200 each bind uracil; that span reads GDA. Aspartate 199 provides a ligand contact to 5-phospho-alpha-D-ribose 1-diphosphate.

It belongs to the UPRTase family. It depends on Mg(2+) as a cofactor.

The enzyme catalyses UMP + diphosphate = 5-phospho-alpha-D-ribose 1-diphosphate + uracil. The protein operates within pyrimidine metabolism; UMP biosynthesis via salvage pathway; UMP from uracil: step 1/1. Allosterically activated by GTP. Catalyzes the conversion of uracil and 5-phospho-alpha-D-ribose 1-diphosphate (PRPP) to UMP and diphosphate. In Bordetella pertussis (strain Tohama I / ATCC BAA-589 / NCTC 13251), this protein is Uracil phosphoribosyltransferase.